Consider the following 183-residue polypeptide: Cell division protein SepF (183 aa).

The tract at residues Met-13–Glu-58 is disordered. Acidic residues predominate over residues Asp-16–Asp-36.

Belongs to the SepF family. As to quaternary structure, homodimer. Interacts with FtsZ.

It localises to the cytoplasm. Cell division protein that is part of the divisome complex and is recruited early to the Z-ring. Probably stimulates Z-ring formation, perhaps through the cross-linking of FtsZ protofilaments. Its function overlaps with FtsA. This Lachnospira eligens (strain ATCC 27750 / DSM 3376 / VPI C15-48 / C15-B4) (Eubacterium eligens) protein is Cell division protein SepF.